Consider the following 151-residue polypeptide: 3-hydroxyacyl-[acyl-carrier-protein] dehydratase FabZ (151 aa).

His56 is an active-site residue.

The protein belongs to the thioester dehydratase family. FabZ subfamily.

Its subcellular location is the cytoplasm. The catalysed reaction is a (3R)-hydroxyacyl-[ACP] = a (2E)-enoyl-[ACP] + H2O. Involved in unsaturated fatty acids biosynthesis. Catalyzes the dehydration of short chain beta-hydroxyacyl-ACPs and long chain saturated and unsaturated beta-hydroxyacyl-ACPs. This is 3-hydroxyacyl-[acyl-carrier-protein] dehydratase FabZ from Rhodopseudomonas palustris (strain HaA2).